The sequence spans 91 residues: Elongation factor 1-beta (91 aa).

It belongs to the EF-1-beta/EF-1-delta family.

Its function is as follows. Promotes the exchange of GDP for GTP in EF-1-alpha/GDP, thus allowing the regeneration of EF-1-alpha/GTP that could then be used to form the ternary complex EF-1-alpha/GTP/AAtRNA. This chain is Elongation factor 1-beta, found in Thermofilum pendens (strain DSM 2475 / Hrk 5).